The sequence spans 387 residues: MTVSELNLKVKALLESYFENIILSGEISKITLHGSGHWYFDLKDEKSSISCAMFKGANLKVGFKPAVGDFLELCGSVSLYAESGRYQFIATSMKKAGFGDLEAQFLALKERLQKEGLFDPRFKKSLPKFPKKVGIITSKTSAALQDMLKLIHQKEYFLAKIYIFDALTQGNNAPFSLIQALRKADDMDLDVLIIARGGGSREDLFCFNDENLAREIFKAKTPIISAIGHEIDYVISDFVSDFRAPTPSAAIDTLFYSKLDIEQSLDLMEEKLIQLWNHKMQNYENLLLNLSKFFKFNSLPKIIDEKIKQSHNIEKQLNHLLANQMRYNELKLDKLQNAYLQHENFFNKSKKFICIRKNGKIANLEDLKSDDIVILSSQISQKEAKIL.

It belongs to the XseA family. As to quaternary structure, heterooligomer composed of large and small subunits.

It localises to the cytoplasm. The enzyme catalyses Exonucleolytic cleavage in either 5'- to 3'- or 3'- to 5'-direction to yield nucleoside 5'-phosphates.. Bidirectionally degrades single-stranded DNA into large acid-insoluble oligonucleotides, which are then degraded further into small acid-soluble oligonucleotides. The protein is Exodeoxyribonuclease 7 large subunit of Campylobacter jejuni subsp. doylei (strain ATCC BAA-1458 / RM4099 / 269.97).